A 338-amino-acid polypeptide reads, in one-letter code: Ketol-acid reductoisomerase (NADP(+)) (338 aa).

Residues 1–181 (MHVYYDKDCD…GGGRTGIIET (181 aa)) enclose the KARI N-terminal Rossmann domain. NADP(+) is bound by residues 24 to 27 (YGSQ), Arg47, Ser50, Thr52, and 82 to 85 (DEFQ). The active site involves His107. Position 133 (Gly133) interacts with NADP(+). Residues 182-327 (TFKDETETDL…AKLRAMMPWI (146 aa)) enclose the KARI C-terminal knotted domain. Mg(2+)-binding residues include Asp190, Glu194, Glu226, and Glu230. Ser251 provides a ligand contact to substrate.

It belongs to the ketol-acid reductoisomerase family. Mg(2+) is required as a cofactor.

The enzyme catalyses (2R)-2,3-dihydroxy-3-methylbutanoate + NADP(+) = (2S)-2-acetolactate + NADPH + H(+). It carries out the reaction (2R,3R)-2,3-dihydroxy-3-methylpentanoate + NADP(+) = (S)-2-ethyl-2-hydroxy-3-oxobutanoate + NADPH + H(+). Its pathway is amino-acid biosynthesis; L-isoleucine biosynthesis; L-isoleucine from 2-oxobutanoate: step 2/4. The protein operates within amino-acid biosynthesis; L-valine biosynthesis; L-valine from pyruvate: step 2/4. Functionally, involved in the biosynthesis of branched-chain amino acids (BCAA). Catalyzes an alkyl-migration followed by a ketol-acid reduction of (S)-2-acetolactate (S2AL) to yield (R)-2,3-dihydroxy-isovalerate. In the isomerase reaction, S2AL is rearranged via a Mg-dependent methyl migration to produce 3-hydroxy-3-methyl-2-ketobutyrate (HMKB). In the reductase reaction, this 2-ketoacid undergoes a metal-dependent reduction by NADPH to yield (R)-2,3-dihydroxy-isovalerate. The protein is Ketol-acid reductoisomerase (NADP(+)) of Cellvibrio japonicus (strain Ueda107) (Pseudomonas fluorescens subsp. cellulosa).